A 763-amino-acid polypeptide reads, in one-letter code: Phospholipid phosphatase-related protein type 4 (763 aa).

Residues 33-54 (VHTSPGGGRRPGQAAGMSAKER) are disordered. Residue S36 is modified to Phosphoserine. 3 helical membrane passes run 67–87 (LPCFYFVELPILASSVVSLYF), 119–139 (AIPFLMLLSLAFAGPAITIMV), and 178–198 (FVGVHVFGLCSTALITDIIQL). N-linked (GlcNAc...) asparagine glycans are attached at residues N214 and N219. Residues 247–267 (SFPSQHATLAAFAAVYVSMYF) form a helical membrane-spanning segment. N-linked (GlcNAc...) asparagine glycosylation is present at N268. The next 2 helical transmembrane spans lie at 276 to 296 (KLLKPLLVFTFIICGIICGLT) and 308 to 328 (VYCGFLIGGGIALYLGLYAVG). S346 bears the Phosphoserine mark. An N-linked (GlcNAc...) asparagine glycan is attached at N362. S385 carries the post-translational modification Phosphoserine. N-linked (GlcNAc...) asparagine glycosylation is present at N432. At S438 the chain carries Phosphoserine. N455 carries an N-linked (GlcNAc...) asparagine glycan. A disordered region spans residues 458-529 (RKLSLQVIEP…PRVSIQSRPG (72 aa)). 2 positions are modified to phosphoserine: S461 and S472. Residues N513, N543, and N568 are each glycosylated (N-linked (GlcNAc...) asparagine). Residue S606 is modified to Phosphoserine. The segment covering 669–694 (DSESCESLKDSFGSGDRKRSNIDSNE) has biased composition (basic and acidic residues). Disordered regions lie at residues 669 to 698 (DSESCESLKDSFGSGDRKRSNIDSNEHHHH) and 739 to 763 (ERSNSPENTRNIFYKGTSPTRAYKD). A compositionally biased stretch (polar residues) spans 740 to 749 (RSNSPENTRN).

This sequence belongs to the PA-phosphatase related phosphoesterase family. O-glycosylated. Probably at Ser-346. In terms of tissue distribution, expressed by glutamatergic neurons (at protein level).

Its subcellular location is the postsynaptic density membrane. In terms of biological role, postsynaptic density membrane protein that indirectly regulates glutamatergic synaptic transmission through lysophosphatidic acid (LPA)-mediated signaling pathways. Binds lysophosphatidic acid (LPA) and mediates its internalization into cells. Could act as receptor or a transporter of this lipid at the post-synaptic membrane. Modulates lysophosphatidic acid (LPA) activity in neuron axonal outgrowth during development by attenuating phospholipid-induced axon collapse. In Homo sapiens (Human), this protein is Phospholipid phosphatase-related protein type 4.